The primary structure comprises 252 residues: Small ribosomal subunit protein uS2B (252 aa).

Ser-2 carries the post-translational modification N-acetylserine. 2 stretches are compositionally biased toward acidic residues: residues 213-229 (VAEEAAAAEEGEEEEVK) and 241-252 (EWAEENADNVEW). A disordered region spans residues 213-252 (VAEEAAAAEEGEEEEVKEEVTEGQAEATEWAEENADNVEW).

It belongs to the universal ribosomal protein uS2 family. In terms of assembly, component of the small ribosomal subunit. Mature ribosomes consist of a small (40S) and a large (60S) subunit. The 40S subunit contains about 33 different proteins and 1 molecule of RNA (18S). The 60S subunit contains about 49 different proteins and 3 molecules of RNA (25S, 5.8S and 5S). Interacts with RPS21.

It is found in the cytoplasm. Required for the assembly and/or stability of the 40S ribosomal subunit. Required for the processing of the 20S rRNA-precursor to mature 18S rRNA in a late step of the maturation of 40S ribosomal subunits. This is Small ribosomal subunit protein uS2B from Saccharomyces cerevisiae (strain RM11-1a) (Baker's yeast).